Consider the following 167-residue polypeptide: MKWCKRGYVLAAILALASATIQAADVTITVNGKVVAKPCTVSTTNATVDLGDLYSFSLMSAGAASAWHDVALELTNCPVGTSRVTASFSGAADSTGYYKNQGTAQNIQLELQDDSGNTLNTGATKTVQVDDSSQSAHFPLQVRALTVNGGATQGTIQAVISITYTYS.

Residues 1–23 (MKWCKRGYVLAAILALASATIQA) form the signal peptide. Cysteine 39 and cysteine 77 are disulfide-bonded.

Belongs to the fimbrial protein family.

It localises to the fimbrium. Involved in regulation of length and mediation of adhesion of type 1 fimbriae (but not necessary for the production of fimbriae). Involved in the integration of FimH in the fimbriae. This chain is Protein FimG (fimG), found in Escherichia coli (strain K12).